Reading from the N-terminus, the 382-residue chain is (R,R)-butanediol dehydrogenase (382 aa).

Cys-39 is a binding site for Zn(2+). The residue at position 63 (Ser-63) is a Phosphoserine. Residues His-73, Cys-103, Cys-120, Cys-123, Cys-131, and Glu-173 each coordinate Zn(2+).

The protein belongs to the zinc-containing alcohol dehydrogenase family. Homodimer. Zn(2+) is required as a cofactor.

It localises to the cytoplasm. The catalysed reaction is (R,R)-butane-2,3-diol + NAD(+) = (R)-acetoin + NADH + H(+). Functionally, NAD-dependent (R,R)-butanediol dehydrogenase which catalyzes oxidation of (R,R)-butane-2,3-diol to (3R)-acetoin, of meso-butanediol to (3S)-acetoin, and reduction of acetoin. Allows the use of 2,3-butanediol as an aerobic carbon source. This Saccharomyces cerevisiae (strain ATCC 204508 / S288c) (Baker's yeast) protein is (R,R)-butanediol dehydrogenase (BDH1).